We begin with the raw amino-acid sequence, 427 residues long: Gamma-glutamyl phosphate reductase (427 aa).

The protein belongs to the gamma-glutamyl phosphate reductase family.

Its subcellular location is the cytoplasm. It catalyses the reaction L-glutamate 5-semialdehyde + phosphate + NADP(+) = L-glutamyl 5-phosphate + NADPH + H(+). The protein operates within amino-acid biosynthesis; L-proline biosynthesis; L-glutamate 5-semialdehyde from L-glutamate: step 2/2. Catalyzes the NADPH-dependent reduction of L-glutamate 5-phosphate into L-glutamate 5-semialdehyde and phosphate. The product spontaneously undergoes cyclization to form 1-pyrroline-5-carboxylate. The protein is Gamma-glutamyl phosphate reductase of Bifidobacterium adolescentis (strain ATCC 15703 / DSM 20083 / NCTC 11814 / E194a).